A 747-amino-acid polypeptide reads, in one-letter code: Kinesin-like protein KIF3B (747 aa).

Met-1 carries the N-acetylmethionine modification. At Ser-2 the chain carries N-acetylserine; in Kinesin-like protein KIF3B, N-terminally processed. Residues 9-340 form the Kinesin motor domain; sequence SVRVVVRCRP…LRYANRAKNI (332 aa). 96–103 contacts ATP; the sequence is GQTGTGKT. Positions 346 to 579 form a coiled coil; that stretch reads VNEDPKDALL…EQTQNELTRE (234 aa). Disordered regions lie at residues 374–412 and 698–747; these read IGRR…DKDD and IQVD…LVPK. Over residues 393–411 the composition is skewed to acidic residues; the sequence is GEEEEEEGEEGEEDGDDKD. The interval 580 to 747 is globular; sequence LKLKHLIIEN…YPQSRGLVPK (168 aa). A compositionally biased stretch (polar residues) spans 701-710; sequence DASSFESTAS. Positions 711–721 are enriched in basic residues; the sequence is RKPKARPKSGR. Residues 722-735 are compositionally biased toward low complexity; it reads KSGSSSSSSGNPAS.

It belongs to the TRAFAC class myosin-kinesin ATPase superfamily. Kinesin family. Kinesin II subfamily. As to quaternary structure, heterodimer of KIF3A and KIF3B. KIF3A/KIF3B heterodimer interacts with KIFAP3 forming a heterotrimeric (KIF3A/KIF3B/KIFAP3) complex. Interacts with the SMC3 subunit of the cohesin complex. Interacts directly with IFT20. Interacts with FLCN.

It is found in the cytoplasm. It localises to the cytoskeleton. The protein localises to the cell projection. The protein resides in the cilium. Its subcellular location is the dendritic spine. Functionally, microtubule-based molecular motor that transport intracellular cargos, such as vesicles, organelles and protein complexes. Uses ATP hydrolysis to generate force to bind and move along the microtubule. Plays a role in cilia formation. Involved in photoreceptor integrity and opsin trafficking in rod photoreceptors. Transports vesicles containing N-methyl-D-aspartate (NMDA) receptor subunit GRIN2A into neuronal dendrites. This chain is Kinesin-like protein KIF3B, found in Mus musculus (Mouse).